The primary structure comprises 277 residues: Bifunctional protein FolD 1 (277 aa).

NADP(+) contacts are provided by residues 162–164 and serine 187; that span reads GDS.

It belongs to the tetrahydrofolate dehydrogenase/cyclohydrolase family. Homodimer.

It catalyses the reaction (6R)-5,10-methylene-5,6,7,8-tetrahydrofolate + NADP(+) = (6R)-5,10-methenyltetrahydrofolate + NADPH. The catalysed reaction is (6R)-5,10-methenyltetrahydrofolate + H2O = (6R)-10-formyltetrahydrofolate + H(+). It functions in the pathway one-carbon metabolism; tetrahydrofolate interconversion. Catalyzes the oxidation of 5,10-methylenetetrahydrofolate to 5,10-methenyltetrahydrofolate and then the hydrolysis of 5,10-methenyltetrahydrofolate to 10-formyltetrahydrofolate. This is Bifunctional protein FolD 1 from Syntrophomonas wolfei subsp. wolfei (strain DSM 2245B / Goettingen).